A 536-amino-acid polypeptide reads, in one-letter code: Glutamyl-tRNA(Gln) amidotransferase subunit B, mitochondrial (536 aa).

This sequence belongs to the GatB/GatE family. GatB subfamily. In terms of assembly, subunit of the heterotrimeric GatFAB amidotransferase (AdT) complex, composed of A, B and F subunits.

Its subcellular location is the mitochondrion. It carries out the reaction L-glutamyl-tRNA(Gln) + L-glutamine + ATP + H2O = L-glutaminyl-tRNA(Gln) + L-glutamate + ADP + phosphate + H(+). Its function is as follows. Allows the formation of correctly charged Gln-tRNA(Gln) through the transamidation of misacylated Glu-tRNA(Gln) in the mitochondria. The reaction takes place in the presence of glutamine and ATP through an activated gamma-phospho-Glu-tRNA(Gln). The polypeptide is Glutamyl-tRNA(Gln) amidotransferase subunit B, mitochondrial (Vanderwaltozyma polyspora (strain ATCC 22028 / DSM 70294 / BCRC 21397 / CBS 2163 / NBRC 10782 / NRRL Y-8283 / UCD 57-17) (Kluyveromyces polysporus)).